We begin with the raw amino-acid sequence, 373 residues long: Phospho-N-acetylmuramoyl-pentapeptide-transferase (373 aa).

10 helical membrane-spanning segments follow: residues Leu-28–Tyr-48, Thr-72–Ala-92, Leu-94–Trp-114, Tyr-135–Gln-155, Ile-177–Ile-197, Gly-212–Ser-232, Val-252–His-272, Val-276–Met-296, Ile-301–Val-321, and Gln-350–Leu-370.

The protein belongs to the glycosyltransferase 4 family. MraY subfamily. It depends on Mg(2+) as a cofactor.

Its subcellular location is the cell inner membrane. It carries out the reaction UDP-N-acetyl-alpha-D-muramoyl-L-alanyl-gamma-D-glutamyl-meso-2,6-diaminopimeloyl-D-alanyl-D-alanine + di-trans,octa-cis-undecaprenyl phosphate = di-trans,octa-cis-undecaprenyl diphospho-N-acetyl-alpha-D-muramoyl-L-alanyl-D-glutamyl-meso-2,6-diaminopimeloyl-D-alanyl-D-alanine + UMP. The protein operates within cell wall biogenesis; peptidoglycan biosynthesis. Functionally, catalyzes the initial step of the lipid cycle reactions in the biosynthesis of the cell wall peptidoglycan: transfers peptidoglycan precursor phospho-MurNAc-pentapeptide from UDP-MurNAc-pentapeptide onto the lipid carrier undecaprenyl phosphate, yielding undecaprenyl-pyrophosphoryl-MurNAc-pentapeptide, known as lipid I. In Psychrobacter sp. (strain PRwf-1), this protein is Phospho-N-acetylmuramoyl-pentapeptide-transferase.